A 409-amino-acid polypeptide reads, in one-letter code: Phosphopentomutase (409 aa).

The Mn(2+) site is built by D10, D302, H307, D343, H344, and H355.

It belongs to the phosphopentomutase family. Mn(2+) is required as a cofactor.

The protein resides in the cytoplasm. The enzyme catalyses 2-deoxy-alpha-D-ribose 1-phosphate = 2-deoxy-D-ribose 5-phosphate. It carries out the reaction alpha-D-ribose 1-phosphate = D-ribose 5-phosphate. Its pathway is carbohydrate degradation; 2-deoxy-D-ribose 1-phosphate degradation; D-glyceraldehyde 3-phosphate and acetaldehyde from 2-deoxy-alpha-D-ribose 1-phosphate: step 1/2. Functionally, isomerase that catalyzes the conversion of deoxy-ribose 1-phosphate (dRib-1-P) and ribose 1-phosphate (Rib-1-P) to deoxy-ribose 5-phosphate (dRib-5-P) and ribose 5-phosphate (Rib-5-P), respectively. The polypeptide is Phosphopentomutase (Chelativorans sp. (strain BNC1)).